Reading from the N-terminus, the 275-residue chain is Expansin-B6 (275 aa).

The signal sequence occupies residues 1 to 25 (MAARMGSKVAAILAILSVLVVHGSC). A glycan (N-linked (GlcNAc...) asparagine) is linked at Asn-33. In terms of domain architecture, Expansin-like EG45 spans 64–170 (GGACGFKNVN…RRVPCNYPGL (107 aa)). 3 disulfide bridges follow: Cys-67-Cys-95, Cys-98-Cys-165, and Cys-103-Cys-109. The 88-residue stretch at 183–270 (VYFAVLVEYE…NWSPNSNYRS (88 aa)) folds into the Expansin-like CBD domain.

The protein belongs to the expansin family. Expansin B subfamily. In terms of tissue distribution, expressed in internodes.

It is found in the secreted. The protein localises to the cell wall. The protein resides in the membrane. May cause loosening and extension of plant cell walls by disrupting non-covalent bonding between cellulose microfibrils and matrix glucans. No enzymatic activity has been found. May be required for rapid internodal elongation in deepwater rice during submergence. This chain is Expansin-B6 (EXPB6), found in Oryza sativa subsp. japonica (Rice).